The primary structure comprises 248 residues: MNKELLLGVNIDHIATIRQARGTRYPDPVQAAMDAEEAGADGITLHMREDLRHIQARDVRLIKQVLQTRMNLELAVTEAMLDFAEEISPEHACLVPEKREELTTEGGLDILTHRNVVEKAVRRLQLMGSEVSLFIDPDKEQIRAAVDVGAPVIELHTGCYADATSEEKQHYELQRIKEAAEFAASLNLVVNAGHGLHYHNVKPIAAIRELNELNIGHAIIARALFCGLKEAVRHMRQLMQEARLYVND.

Asn-10 contributes to the 3-amino-2-oxopropyl phosphate binding site. Residue Asp-12–His-13 coordinates 1-deoxy-D-xylulose 5-phosphate. A 3-amino-2-oxopropyl phosphate-binding site is contributed by Arg-21. Residue His-46 is the Proton acceptor of the active site. The 1-deoxy-D-xylulose 5-phosphate site is built by Arg-48 and His-53. The active-site Proton acceptor is the Glu-73. Thr-103 lines the 1-deoxy-D-xylulose 5-phosphate pocket. His-194 (proton donor) is an active-site residue. Residues Gly-195 and Gly-216 to His-217 each bind 3-amino-2-oxopropyl phosphate.

This sequence belongs to the PNP synthase family. In terms of assembly, homooctamer; tetramer of dimers.

It localises to the cytoplasm. The catalysed reaction is 3-amino-2-oxopropyl phosphate + 1-deoxy-D-xylulose 5-phosphate = pyridoxine 5'-phosphate + phosphate + 2 H2O + H(+). It functions in the pathway cofactor biosynthesis; pyridoxine 5'-phosphate biosynthesis; pyridoxine 5'-phosphate from D-erythrose 4-phosphate: step 5/5. Catalyzes the complicated ring closure reaction between the two acyclic compounds 1-deoxy-D-xylulose-5-phosphate (DXP) and 3-amino-2-oxopropyl phosphate (1-amino-acetone-3-phosphate or AAP) to form pyridoxine 5'-phosphate (PNP) and inorganic phosphate. This chain is Pyridoxine 5'-phosphate synthase, found in Legionella pneumophila (strain Corby).